An 89-amino-acid polypeptide reads, in one-letter code: Neurotoxin beta-KTx 12 (89 aa).

A signal peptide spans 1–20 (MKQYIFFLALIVLVSTFAEA). A propeptide spanning residues 21–39 (GKKTEILDKVKKVFSKAKD) is cleaved from the precursor. Residues 53 to 89 (ELGCPFIDKWCEDHCESKKLVGKCENFDCSCVKLGGK) form the BetaSPN-type CS-alpha/beta domain. Intrachain disulfides connect cysteine 56-cysteine 76, cysteine 63-cysteine 81, and cysteine 67-cysteine 83.

This sequence belongs to the long chain scorpion toxin family. Class 2 subfamily. As to expression, expressed by the venom gland.

The protein resides in the secreted. In terms of biological role, inhibits voltage-gated potassium channel. This chain is Neurotoxin beta-KTx 12, found in Lychas mucronatus (Chinese swimming scorpion).